A 366-amino-acid chain; its full sequence is Ribosomal RNA small subunit methyltransferase H 1 (366 aa).

The tract at residues 1–46 (MADQNINKNEKVLTGQPTENQEPVHKRRERYKGTHPKTFKEKYKER) is disordered. Over residues 25 to 37 (HKRRERYKGTHPK) the composition is skewed to basic residues. Residues 97-99 (GGH), aspartate 117, phenylalanine 147, aspartate 166, and glutamine 173 each bind S-adenosyl-L-methionine.

It belongs to the methyltransferase superfamily. RsmH family.

Its subcellular location is the cytoplasm. It carries out the reaction cytidine(1402) in 16S rRNA + S-adenosyl-L-methionine = N(4)-methylcytidine(1402) in 16S rRNA + S-adenosyl-L-homocysteine + H(+). Specifically methylates the N4 position of cytidine in position 1402 (C1402) of 16S rRNA. This is Ribosomal RNA small subunit methyltransferase H 1 from Lachnoclostridium phytofermentans (strain ATCC 700394 / DSM 18823 / ISDg) (Clostridium phytofermentans).